The following is a 169-amino-acid chain: MSVLQVLHIPDERLRKVAKPVEEVNAEIQRIVDDMFETMYAEEGIGLAATQVDIHQRIIVIDVSENRNERLVLINPELLEKSGETGIEEGCLSIPEQRALVPRAEKVKIRALDRDGNPFELEADGLLAICIQHEMDHLVGKLFIDYLSPLKQQRIRQKVEKLDRLNARA.

Residues Cys-91 and His-133 each coordinate Fe cation. Glu-134 is a catalytic residue. His-137 provides a ligand contact to Fe cation.

Belongs to the polypeptide deformylase family. The cofactor is Fe(2+).

It catalyses the reaction N-terminal N-formyl-L-methionyl-[peptide] + H2O = N-terminal L-methionyl-[peptide] + formate. In terms of biological role, removes the formyl group from the N-terminal Met of newly synthesized proteins. Requires at least a dipeptide for an efficient rate of reaction. N-terminal L-methionine is a prerequisite for activity but the enzyme has broad specificity at other positions. The polypeptide is Peptide deformylase (Salmonella arizonae (strain ATCC BAA-731 / CDC346-86 / RSK2980)).